Consider the following 289-residue polypeptide: Polyamine aminopropyltransferase (289 aa).

In terms of domain architecture, PABS spans 5 to 245 (PGPITLIEPL…YAVNFILGSL (241 aa)). Q36 is a binding site for S-methyl-5'-thioadenosine. The spermidine site is built by H67 and E91. S-methyl-5'-thioadenosine contacts are provided by residues D111 and 143-144 (DG). Residue D164 is the Proton acceptor of the active site.

This sequence belongs to the spermidine/spermine synthase family. As to quaternary structure, homodimer or homotetramer.

Its subcellular location is the cytoplasm. It catalyses the reaction S-adenosyl 3-(methylsulfanyl)propylamine + putrescine = S-methyl-5'-thioadenosine + spermidine + H(+). It participates in amine and polyamine biosynthesis; spermidine biosynthesis; spermidine from putrescine: step 1/1. Catalyzes the irreversible transfer of a propylamine group from the amino donor S-adenosylmethioninamine (decarboxy-AdoMet) to putrescine (1,4-diaminobutane) to yield spermidine. The sequence is that of Polyamine aminopropyltransferase from Pyrobaculum calidifontis (strain DSM 21063 / JCM 11548 / VA1).